Reading from the N-terminus, the 847-residue chain is Signal transducer and activator of transcription 6 (847 aa).

An N-acetylserine modification is found at S2. One can recognise an SH2 domain in the interval 517-632 (WFDGVLDLTK…EAFRSHYKPE (116 aa)). The residue at position 641 (Y641) is a Phosphotyrosine; by JAK. Positions 802-806 (LTKLL) match the LXXLL motif motif. The interval 809-847 (GQGESGGGSLGAQPLLQPSHYGQSGISMSHMDLRANPSW) is disordered.

Belongs to the transcription factor STAT family. As to quaternary structure, forms a homodimer or a heterodimer with a related family member. Interacts with NCOA1 via its C-terminal LXXLL motif. Tyrosine phosphorylated on Tyr-641 following stimulation by IL4/interleukin-4. Tyrosine phosphorylated following stimulation by IL3/interleukin-3. Dephosphorylation on tyrosine residues by PTPN2 negatively regulates the IL4/interleukin-4 mediated signaling. In terms of processing, mono-ADP-ribosylated by PARP14.

Its subcellular location is the cytoplasm. The protein localises to the nucleus. In terms of biological role, carries out a dual function: signal transduction and activation of transcription. Involved in IL4/interleukin-4- and IL3/interleukin-3-mediated signaling. The polypeptide is Signal transducer and activator of transcription 6 (STAT6) (Homo sapiens (Human)).